We begin with the raw amino-acid sequence, 396 residues long: Tryptophan synthase beta chain (396 aa).

The residue at position 88 (K88) is an N6-(pyridoxal phosphate)lysine.

This sequence belongs to the TrpB family. Tetramer of two alpha and two beta chains. Requires pyridoxal 5'-phosphate as cofactor.

It catalyses the reaction (1S,2R)-1-C-(indol-3-yl)glycerol 3-phosphate + L-serine = D-glyceraldehyde 3-phosphate + L-tryptophan + H2O. Its pathway is amino-acid biosynthesis; L-tryptophan biosynthesis; L-tryptophan from chorismate: step 5/5. Its function is as follows. The beta subunit is responsible for the synthesis of L-tryptophan from indole and L-serine. This chain is Tryptophan synthase beta chain, found in Shewanella putrefaciens (strain CN-32 / ATCC BAA-453).